The chain runs to 392 residues: F-box protein At5g65850 (392 aa).

One can recognise an F-box domain in the interval 29–78; it reads TEKSVQIPVDIIIEILLRLPAKSIATCRCVSKLWISVICRQDFTELFLTR.

The polypeptide is F-box protein At5g65850 (Arabidopsis thaliana (Mouse-ear cress)).